The following is a 474-amino-acid chain: tRNA-2-methylthio-N(6)-dimethylallyladenosine synthase (474 aa).

The MTTase N-terminal domain occupies Lys-3–Gly-120. Positions 12, 49, 83, 157, 161, and 164 each coordinate [4Fe-4S] cluster. The Radical SAM core domain occupies Arg-143–Glu-375. The TRAM domain maps to Arg-378–Arg-441.

The protein belongs to the methylthiotransferase family. MiaB subfamily. As to quaternary structure, monomer. Requires [4Fe-4S] cluster as cofactor.

Its subcellular location is the cytoplasm. It carries out the reaction N(6)-dimethylallyladenosine(37) in tRNA + (sulfur carrier)-SH + AH2 + 2 S-adenosyl-L-methionine = 2-methylsulfanyl-N(6)-dimethylallyladenosine(37) in tRNA + (sulfur carrier)-H + 5'-deoxyadenosine + L-methionine + A + S-adenosyl-L-homocysteine + 2 H(+). Functionally, catalyzes the methylthiolation of N6-(dimethylallyl)adenosine (i(6)A), leading to the formation of 2-methylthio-N6-(dimethylallyl)adenosine (ms(2)i(6)A) at position 37 in tRNAs that read codons beginning with uridine. This is tRNA-2-methylthio-N(6)-dimethylallyladenosine synthase from Yersinia enterocolitica serotype O:8 / biotype 1B (strain NCTC 13174 / 8081).